A 614-amino-acid chain; its full sequence is Chaperone protein HtpG (614 aa).

An a; substrate-binding region spans residues 1–324 (MSQIETKEFQ…SEELPLNISR (324 aa)). The b stretch occupies residues 325 to 537 (ETMQDSALIA…SHYGTHSMQR (213 aa)). Positions 538-614 (MMQLMNRDLQ…LNEILEKALR (77 aa)) are c.

This sequence belongs to the heat shock protein 90 family. Homodimer.

Its subcellular location is the cytoplasm. Molecular chaperone. Has ATPase activity. The sequence is that of Chaperone protein HtpG from Desulfitobacterium hafniense (strain Y51).